We begin with the raw amino-acid sequence, 379 residues long: tRNA-specific 2-thiouridylase MnmA (379 aa).

ATP-binding positions include 6-13 (AMSGGVDS) and Leu32. Cys101 (nucleophile) is an active-site residue. A disulfide bond links Cys101 and Cys199. Gly125 is a binding site for ATP. Positions 148–150 (KDQ) are interaction with tRNA. The active-site Cysteine persulfide intermediate is the Cys199.

Belongs to the MnmA/TRMU family.

The protein resides in the cytoplasm. The catalysed reaction is S-sulfanyl-L-cysteinyl-[protein] + uridine(34) in tRNA + AH2 + ATP = 2-thiouridine(34) in tRNA + L-cysteinyl-[protein] + A + AMP + diphosphate + H(+). Functionally, catalyzes the 2-thiolation of uridine at the wobble position (U34) of tRNA, leading to the formation of s(2)U34. The polypeptide is tRNA-specific 2-thiouridylase MnmA (Paenarthrobacter aurescens (strain TC1)).